We begin with the raw amino-acid sequence, 952 residues long: Leucine--tRNA ligase (952 aa).

A 'HIGH' region motif is present at residues 48–58; sequence PYLNGVLHAGH. The 'KMSKS' region motif lies at 644-648; it reads KLSKS. Residue lysine 647 coordinates ATP.

Belongs to the class-I aminoacyl-tRNA synthetase family.

Its subcellular location is the cytoplasm. It carries out the reaction tRNA(Leu) + L-leucine + ATP = L-leucyl-tRNA(Leu) + AMP + diphosphate. In Methanococcus vannielii (strain ATCC 35089 / DSM 1224 / JCM 13029 / OCM 148 / SB), this protein is Leucine--tRNA ligase.